The following is a 185-amino-acid chain: Large ribosomal subunit protein uL22 (185 aa).

The interval 157–185 is disordered; it reads VAAPTPDEDAPKKKQSKKKMARQKLMQRD. Basic residues predominate over residues 169–178; sequence KKQSKKKMAR.

This sequence belongs to the universal ribosomal protein uL22 family.

The polypeptide is Large ribosomal subunit protein uL22 (RpL17) (Argas monolakensis (Mono lake bird tick)).